The chain runs to 62 residues: Protein CYSTEINE-RICH TRANSMEMBRANE MODULE 2 (62 aa).

Helical transmembrane passes span 23 to 39 (VAVAATRSASVVAAAFD) and 33 to 53 (VVAAAFDFYICIIISTLLSLI).

The protein belongs to the CYSTM1 family. Heterodimers. Binds weakly to CYSTM7 and WIH1/CYSTM13. In terms of tissue distribution, mostly expressed in stems, siliques, leaves and flowers and, to a lower extent, in roots.

The protein localises to the cell membrane. The protein resides in the nucleus. Its subcellular location is the secreted. It localises to the cell wall. Functionally, involved in resistance to abiotic stress. Its function is as follows. Confers resistance to heavy metal ions (e.g. cadmium (CdCl(2)) and copper (CuCl(2))) by chelating them at the plasma membrane of root cells, thus stopping their entry and reducing their accumulation. The chain is Protein CYSTEINE-RICH TRANSMEMBRANE MODULE 2 from Arabidopsis thaliana (Mouse-ear cress).